Consider the following 387-residue polypeptide: Formate-dependent phosphoribosylglycinamide formyltransferase (387 aa).

N(1)-(5-phospho-beta-D-ribosyl)glycinamide is bound by residues 21-22 and glutamate 81; that span reads EL. ATP contacts are provided by residues arginine 113, lysine 154, 159-164, 193-196, and glutamate 201; these read SSGHGQ and EEFV. An ATP-grasp domain is found at 118 to 306; it reads VFAAETLDLK…EFALHVRAVL (189 aa). Mg(2+) contacts are provided by glutamate 265 and glutamate 277. N(1)-(5-phospho-beta-D-ribosyl)glycinamide-binding positions include aspartate 284, lysine 352, and 359 to 360; that span reads RR.

It belongs to the PurK/PurT family. As to quaternary structure, homodimer.

The catalysed reaction is N(1)-(5-phospho-beta-D-ribosyl)glycinamide + formate + ATP = N(2)-formyl-N(1)-(5-phospho-beta-D-ribosyl)glycinamide + ADP + phosphate + H(+). Its pathway is purine metabolism; IMP biosynthesis via de novo pathway; N(2)-formyl-N(1)-(5-phospho-D-ribosyl)glycinamide from N(1)-(5-phospho-D-ribosyl)glycinamide (formate route): step 1/1. Involved in the de novo purine biosynthesis. Catalyzes the transfer of formate to 5-phospho-ribosyl-glycinamide (GAR), producing 5-phospho-ribosyl-N-formylglycinamide (FGAR). Formate is provided by PurU via hydrolysis of 10-formyl-tetrahydrofolate. This Sulfurovum sp. (strain NBC37-1) protein is Formate-dependent phosphoribosylglycinamide formyltransferase.